The sequence spans 319 residues: Acetyl esterase (319 aa).

The Involved in the stabilization of the negatively charged intermediate by the formation of the oxyanion hole signature appears at 91–93 (HGG). Residues serine 165, aspartate 262, and histidine 292 contribute to the active site.

The protein belongs to the 'GDXG' lipolytic enzyme family. Homodimer. Interacts with MalT and MelA.

The protein resides in the cytoplasm. Displays esterase activity towards short chain fatty esters (acyl chain length of up to 8 carbons). Able to hydrolyze triacetylglycerol (triacetin) and tributyrylglycerol (tributyrin), but not trioleylglycerol (triolein) or cholesterol oleate. Negatively regulates MalT activity by antagonizing maltotriose binding. Inhibits MelA galactosidase activity. This is Acetyl esterase from Escherichia coli O45:K1 (strain S88 / ExPEC).